The chain runs to 133 residues: Small ribosomal subunit protein uS8 (133 aa).

It belongs to the universal ribosomal protein uS8 family. As to quaternary structure, part of the 30S ribosomal subunit.

In terms of biological role, one of the primary rRNA binding proteins, it binds directly to 16S rRNA central domain where it helps coordinate assembly of the platform of the 30S subunit. The chain is Small ribosomal subunit protein uS8 from Hyperthermus butylicus (strain DSM 5456 / JCM 9403 / PLM1-5).